Reading from the N-terminus, the 863-residue chain is Alanine--tRNA ligase (863 aa).

Zn(2+) is bound by residues His-552, His-556, Cys-654, and His-658.

This sequence belongs to the class-II aminoacyl-tRNA synthetase family. Zn(2+) serves as cofactor.

The protein localises to the cytoplasm. It carries out the reaction tRNA(Ala) + L-alanine + ATP = L-alanyl-tRNA(Ala) + AMP + diphosphate. Catalyzes the attachment of alanine to tRNA(Ala) in a two-step reaction: alanine is first activated by ATP to form Ala-AMP and then transferred to the acceptor end of tRNA(Ala). Also edits incorrectly charged Ser-tRNA(Ala) and Gly-tRNA(Ala) via its editing domain. This Halorhodospira halophila (strain DSM 244 / SL1) (Ectothiorhodospira halophila (strain DSM 244 / SL1)) protein is Alanine--tRNA ligase.